We begin with the raw amino-acid sequence, 962 residues long: Putative RNA Helicase B962L (962 aa).

One can recognise a Helicase ATP-binding domain in the interval 43–229 (IPTSLADRVL…FGIGKENIIL (187 aa)). 56–63 (SRTGSGKS) contributes to the ATP binding site. The DEAH box motif lies at 167–170 (DEAH). The Helicase C-terminal domain occupies 253 to 459 (ACETALTIHK…TIKKNKEGVF (207 aa)). Residues 521–541 (GYFWQAAISDIATILAVVSVA) form a helical membrane-spanning segment.

The protein belongs to the DEAD box helicase family. DEAH subfamily.

The protein resides in the host membrane. The protein localises to the virion. The catalysed reaction is ATP + H2O = ADP + phosphate + H(+). The protein is Putative RNA Helicase B962L of African swine fever virus (isolate Tick/South Africa/Pretoriuskop Pr4/1996) (ASFV).